Here is a 348-residue protein sequence, read N- to C-terminus: 4-hydroxy-2-oxovalerate aldolase (348 aa).

The Pyruvate carboxyltransferase domain occupies 9–261 (ITVHDMTLRD…RTGVDVWKIQ (253 aa)). 17–18 (RD) provides a ligand contact to substrate. Mn(2+) is bound at residue aspartate 18. Histidine 21 serves as the catalytic Proton acceptor. The substrate site is built by serine 171 and histidine 200. The Mn(2+) site is built by histidine 200 and histidine 202. Substrate is bound at residue tyrosine 291.

Belongs to the 4-hydroxy-2-oxovalerate aldolase family.

The enzyme catalyses (S)-4-hydroxy-2-oxopentanoate = acetaldehyde + pyruvate. This Ralstonia pickettii (strain 12J) protein is 4-hydroxy-2-oxovalerate aldolase.